A 341-amino-acid polypeptide reads, in one-letter code: Phosphoribosylformylglycinamidine cyclo-ligase (341 aa).

This sequence belongs to the AIR synthase family.

Its subcellular location is the cytoplasm. It catalyses the reaction 2-formamido-N(1)-(5-O-phospho-beta-D-ribosyl)acetamidine + ATP = 5-amino-1-(5-phospho-beta-D-ribosyl)imidazole + ADP + phosphate + H(+). Its pathway is purine metabolism; IMP biosynthesis via de novo pathway; 5-amino-1-(5-phospho-D-ribosyl)imidazole from N(2)-formyl-N(1)-(5-phospho-D-ribosyl)glycinamide: step 2/2. This Lachnoclostridium phytofermentans (strain ATCC 700394 / DSM 18823 / ISDg) (Clostridium phytofermentans) protein is Phosphoribosylformylglycinamidine cyclo-ligase.